The primary structure comprises 259 residues: Adenylate kinase (259 aa).

52–57 (GAGKGT) serves as a coordination point for ATP. The NMP stretch occupies residues 72–101 (ATGDMLRSQVAKKTDLGREAKKIMDQGGLV). AMP-binding positions include threonine 73, arginine 78, 99–101 (GLV), 128–131 (GFPR), and glutamine 135. An LID region spans residues 169–206 (GRLVHPASGRSYHKIFNPPKEAMKDDITGEPLVQRSDD). ATP-binding positions include arginine 170 and 179–180 (SY). Arginine 203 and arginine 214 together coordinate AMP. ATP is bound at residue glutamine 242.

The protein belongs to the adenylate kinase family. AK2 subfamily. As to quaternary structure, monomer.

It is found in the cytoplasm. It localises to the mitochondrion intermembrane space. The catalysed reaction is AMP + ATP = 2 ADP. Its function is as follows. Catalyzes the reversible transfer of the terminal phosphate group between ATP and AMP. Plays an important role in cellular energy homeostasis and in adenine nucleotide metabolism. Adenylate kinase activity is critical for regulation of the phosphate utilization and the AMP de novo biosynthesis pathways. This is Adenylate kinase (adk1) from Emericella nidulans (strain FGSC A4 / ATCC 38163 / CBS 112.46 / NRRL 194 / M139) (Aspergillus nidulans).